Consider the following 105-residue polypeptide: Cuticle protein AMP4 (105 aa).

Residues 1 to 21 are disordered; it reads DRDAQTLTDERNDQGDGNFRY. Residues 16 to 81 form the Chitin-binding type R&amp;R domain; sequence DGNFRYEFET…PSSDLLPVGP (66 aa).

As to expression, arthrodial membrane.

The polypeptide is Cuticle protein AMP4 (Homarus americanus (American lobster)).